The primary structure comprises 307 residues: Mitochondrial glycine transporter YMC1 (307 aa).

Solcar repeat units lie at residues 26–106 (VKDL…MKRF), 121–204 (PQYY…LIAN), and 218–305 (PAWK…AMRL). A run of 6 helical transmembrane segments spans residues 29 to 49 (LLAG…FDTT), 83 to 103 (LTPL…NEAM), 118 to 138 (LSLP…SFLA), 183 to 203 (TILR…ALIA), 223 to 243 (CIFG…LDVI), and 277 to 298 (FFKG…TFAT).

Belongs to the mitochondrial carrier (TC 2.A.29) family.

Its subcellular location is the mitochondrion inner membrane. Secondary mitochondrial glycine transporter required for the biosynthesis of heme at high glycine concentrations. Imports the precursor glycine into the mitochondrial matrix, where it is condensed with succinyl-CoA to produce 5-aminolevulinate (ALA), the first step of heme biosynthesis. The polypeptide is Mitochondrial glycine transporter YMC1 (Saccharomyces cerevisiae (strain ATCC 204508 / S288c) (Baker's yeast)).